A 278-amino-acid polypeptide reads, in one-letter code: 4-deoxy-L-threo-5-hexosulose-uronate ketol-isomerase (278 aa).

Residues His196, His198, Glu203, and His245 each coordinate Zn(2+).

Belongs to the KduI family. Requires Zn(2+) as cofactor.

It catalyses the reaction 5-dehydro-4-deoxy-D-glucuronate = 3-deoxy-D-glycero-2,5-hexodiulosonate. It participates in glycan metabolism; pectin degradation; 2-dehydro-3-deoxy-D-gluconate from pectin: step 4/5. In terms of biological role, catalyzes the isomerization of 5-dehydro-4-deoxy-D-glucuronate to 3-deoxy-D-glycero-2,5-hexodiulosonate. This chain is 4-deoxy-L-threo-5-hexosulose-uronate ketol-isomerase, found in Paraburkholderia phytofirmans (strain DSM 17436 / LMG 22146 / PsJN) (Burkholderia phytofirmans).